Reading from the N-terminus, the 358-residue chain is Nicotinate-nucleotide--dimethylbenzimidazole phosphoribosyltransferase (358 aa).

Catalysis depends on Glu313, which acts as the Proton acceptor.

It belongs to the CobT family.

It catalyses the reaction 5,6-dimethylbenzimidazole + nicotinate beta-D-ribonucleotide = alpha-ribazole 5'-phosphate + nicotinate + H(+). The protein operates within nucleoside biosynthesis; alpha-ribazole biosynthesis; alpha-ribazole from 5,6-dimethylbenzimidazole: step 1/2. Functionally, catalyzes the synthesis of alpha-ribazole-5'-phosphate from nicotinate mononucleotide (NAMN) and 5,6-dimethylbenzimidazole (DMB). The sequence is that of Nicotinate-nucleotide--dimethylbenzimidazole phosphoribosyltransferase from Corynebacterium glutamicum (strain ATCC 13032 / DSM 20300 / JCM 1318 / BCRC 11384 / CCUG 27702 / LMG 3730 / NBRC 12168 / NCIMB 10025 / NRRL B-2784 / 534).